Reading from the N-terminus, the 835-residue chain is Leucine--tRNA ligase (835 aa).

The short motif at proline 36 to histidine 46 is the 'HIGH' region element. The 'KMSKS' region signature appears at lysine 602–serine 606. An ATP-binding site is contributed by lysine 605.

This sequence belongs to the class-I aminoacyl-tRNA synthetase family.

It is found in the cytoplasm. The enzyme catalyses tRNA(Leu) + L-leucine + ATP = L-leucyl-tRNA(Leu) + AMP + diphosphate. This is Leucine--tRNA ligase from Rickettsia conorii (strain ATCC VR-613 / Malish 7).